Consider the following 294-residue polypeptide: MKDRLQELKQRTKEIELSRDSHVSTTETEEQGVFLQQAVIYEREPVAERHLHEIQKLQESINNLADNVQKFGQQQKSLVASMRRFSLLKRESTITKEIKIQAEYINRSLNDLVKEVKKSEVENGPSSVVTRILKSQHAAMFRHFQQIMFIYNDTIAAKQEKCKTFILRQLEVAGKEMSEEDVNDMLHQGKWEVFNESLLTEINITKAQLSEIEQRHKELVNLENQIKDLRDLFIQISLLVEEQGESINNIEMTVNSTKEYVNNTKEKFGLAVKYKKRNPCRVLCCWCCPCCSSK.

In terms of domain architecture, t-SNARE coiled-coil homology spans 209-271; that stretch reads LSEIEQRHKE…NNTKEKFGLA (63 aa).

Belongs to the syntaxin family. As to quaternary structure, interacts with EGFR.

It localises to the cell membrane. Its subcellular location is the cytoplasm. In terms of biological role, plays a role in endosomal trafficking of the epidermal growth factor receptor (EGFR). In Homo sapiens (Human), this protein is Syntaxin-19 (STX19).